The sequence spans 505 residues: Cell division control protein 6 homolog B (505 aa).

Residues 37–72 (KRKMRSDSAAVSGNSVSTPKKLKSHLPSSVPNPGMS) form a disordered region. Polar residues predominate over residues 45–54 (AAVSGNSVST).

The protein belongs to the CDC6/cdc18 family.

The protein localises to the nucleus. May be involved in the initiation of DNA replication. The sequence is that of Cell division control protein 6 homolog B from Arabidopsis thaliana (Mouse-ear cress).